Reading from the N-terminus, the 221-residue chain is 21 kDa seed protein (221 aa).

A signal peptide spans 1–26 (MKTATAVVLLLFAFTSKSYFFGVANA). A disulfide bridge links Cys69 with Cys116.

Belongs to the protease inhibitor I3 (leguminous Kunitz-type inhibitor) family.

This is 21 kDa seed protein (ASP) from Theobroma cacao (Cacao).